A 612-amino-acid chain; its full sequence is MSKIIGIDLGTTNSCVSVMEGGEAVVIPNPEGNRTSPSVVAFKNGERQVGEVAKRQAITNPNTIQSIKRHMGTDYKVKIEEKEYTPQEVSAIILQYIKSYAEDYIGEKVEKAVITVPAYFNDAERQATKDAGKIAGLEVERIINEPTAAALAYGIDKEDQDQTILVYDLGGGTFDVSILDIGDGTFEVVSTAGDNRLGGDDFDQVIIDHMVQEFKKENAIDLSQDKMATQRLKDAAEKAKKDLSGVTQTQISLPFITAGDAGPLHLEMTMSRAKFDELSSDLVERTMQPTRKALSDASLSKSDIDKVILVGGSTRIPAVQEAIKKELGQDPSKGVNPDEVVALGAAIQGGVLQGDVKDVLLLDVTPLSLGIETMGAVTTKLIERNTTIPTSASQTFSTAADNQTAVDIHVLQGEREMASDNKTLGRFQLTDIPPAPRGMPQIEVSFDIDANGIVNVRAKDLGTNKEQSITIKSSSGLSDDEVDRMVKEAEENADADKQRREEVDLRNEADQLIFTTDKTIKDLDDKVSEEDKQKAESAKDELKQALESGDMEQVKAKKDALEEHVQQLSAKLYEQVQQEAQQASGEQGEESGNQDDDVVDADYSEVDDDDKK.

T173 bears the Phosphothreonine; by autocatalysis mark. The segment covering 524–544 has biased composition (basic and acidic residues); that stretch reads DDKVSEEDKQKAESAKDELKQ. Disordered regions lie at residues 524-560 and 572-612; these read DDKVSEEDKQKAESAKDELKQALESGDMEQVKAKKDA and LYEQ…DDKK. The segment covering 574–586 has biased composition (low complexity); the sequence is EQVQQEAQQASGE. Over residues 587 to 612 the composition is skewed to acidic residues; sequence QGEESGNQDDDVVDADYSEVDDDDKK.

This sequence belongs to the heat shock protein 70 family.

Its function is as follows. Acts as a chaperone. This chain is Chaperone protein DnaK, found in Oceanobacillus iheyensis (strain DSM 14371 / CIP 107618 / JCM 11309 / KCTC 3954 / HTE831).